A 183-amino-acid polypeptide reads, in one-letter code: Ribulose bisphosphate carboxylase small subunit, chloroplastic 3 (183 aa).

Residues Met1–Asp43 constitute a chloroplast transit peptide.

Belongs to the RuBisCO small chain family. Heterohexadecamer of 8 large and 8 small subunits.

Its subcellular location is the plastid. It is found in the chloroplast. Its function is as follows. RuBisCO catalyzes two reactions: the carboxylation of D-ribulose 1,5-bisphosphate, the primary event in carbon dioxide fixation, as well as the oxidative fragmentation of the pentose substrate. Both reactions occur simultaneously and in competition at the same active site. Although the small subunit is not catalytic it is essential for maximal activity. The chain is Ribulose bisphosphate carboxylase small subunit, chloroplastic 3 from Acetabularia peniculus (Green alga).